The sequence spans 252 residues: Receptor expression-enhancing protein 3-B (252 aa).

Helical transmembrane passes span 1–21, 35–55, and 57–77; these read MVSGMICKAVVLVFGILYPAY, YVRWMMYWIVFALYTVTETIA, and LTVSWFPLYFELKIAFVVWLL. Positions 163–225 are disordered; that stretch reads ETAETRFFPD…GLRRSQSMRS (63 aa). Positions 198 to 211 are enriched in acidic residues; it reads RTDEDVEVNSEDEV.

This sequence belongs to the DP1 family.

The protein resides in the endoplasmic reticulum membrane. In terms of biological role, microtubule-binding protein required to ensure proper cell division and nuclear envelope reassembly by sequestering the endoplasmic reticulum away from chromosomes during mitosis. Probably acts by clearing the endoplasmic reticulum membrane from metaphase chromosomes. The chain is Receptor expression-enhancing protein 3-B (reep3-b) from Xenopus laevis (African clawed frog).